Consider the following 1088-residue polypeptide: Ran-binding protein 17 (1088 aa).

Ala-2 is subject to N-acetylalanine. Residue Ser-569 is modified to Phosphoserine.

The protein belongs to the exportin family. Binds to nucleoporins and the GTP-bound form of Ran. In terms of tissue distribution, highly expressed in testis, moderately in pancreas and weakly in other tissues studied.

The protein localises to the cytoplasm. Its subcellular location is the nucleus. The protein resides in the nuclear pore complex. May function as a nuclear transport receptor. This is Ran-binding protein 17 (RANBP17) from Homo sapiens (Human).